A 154-amino-acid chain; its full sequence is UPF0178 protein RC1_2062 (154 aa).

Belongs to the UPF0178 family.

The sequence is that of UPF0178 protein RC1_2062 from Rhodospirillum centenum (strain ATCC 51521 / SW).